Consider the following 203-residue polypeptide: Ribosome maturation factor RimP (203 aa).

The interval 184–203 (RRGSAPVEDEEGEGEAPTAH) is disordered.

It belongs to the RimP family.

The protein resides in the cytoplasm. In terms of biological role, required for maturation of 30S ribosomal subunits. This chain is Ribosome maturation factor RimP, found in Methylobacterium nodulans (strain LMG 21967 / CNCM I-2342 / ORS 2060).